A 262-amino-acid chain; its full sequence is 3-methyl-2-oxobutanoate hydroxymethyltransferase (262 aa).

D44 and D83 together coordinate Mg(2+). 3-methyl-2-oxobutanoate contacts are provided by residues 44–45 (DS), D83, and K112. A Mg(2+)-binding site is contributed by E114. The active-site Proton acceptor is the E180.

Belongs to the PanB family. Homodecamer; pentamer of dimers. The cofactor is Mg(2+).

It localises to the cytoplasm. It carries out the reaction 3-methyl-2-oxobutanoate + (6R)-5,10-methylene-5,6,7,8-tetrahydrofolate + H2O = 2-dehydropantoate + (6S)-5,6,7,8-tetrahydrofolate. It participates in cofactor biosynthesis; (R)-pantothenate biosynthesis; (R)-pantoate from 3-methyl-2-oxobutanoate: step 1/2. In terms of biological role, catalyzes the reversible reaction in which hydroxymethyl group from 5,10-methylenetetrahydrofolate is transferred onto alpha-ketoisovalerate to form ketopantoate. The sequence is that of 3-methyl-2-oxobutanoate hydroxymethyltransferase from Chromobacterium violaceum (strain ATCC 12472 / DSM 30191 / JCM 1249 / CCUG 213 / NBRC 12614 / NCIMB 9131 / NCTC 9757 / MK).